We begin with the raw amino-acid sequence, 477 residues long: Ribulose bisphosphate carboxylase large chain (477 aa).

The propeptide occupies 1–2 (MS). The residue at position 3 (P3) is an N-acetylproline. K14 is modified (N6,N6,N6-trimethyllysine). Residues N123 and T173 each contribute to the substrate site. Residue K175 is the Proton acceptor of the active site. Residue K177 coordinates substrate. Mg(2+) contacts are provided by K201, D203, and E204. N6-carboxylysine is present on K201. Catalysis depends on H294, which acts as the Proton acceptor. Residues R295, H327, and S379 each contribute to the substrate site.

This sequence belongs to the RuBisCO large chain family. Type I subfamily. Heterohexadecamer of 8 large chains and 8 small chains; disulfide-linked. The disulfide link is formed within the large subunit homodimers. It depends on Mg(2+) as a cofactor. Post-translationally, the disulfide bond which can form in the large chain dimeric partners within the hexadecamer appears to be associated with oxidative stress and protein turnover.

It localises to the plastid. Its subcellular location is the chloroplast. It catalyses the reaction 2 (2R)-3-phosphoglycerate + 2 H(+) = D-ribulose 1,5-bisphosphate + CO2 + H2O. The catalysed reaction is D-ribulose 1,5-bisphosphate + O2 = 2-phosphoglycolate + (2R)-3-phosphoglycerate + 2 H(+). Its function is as follows. RuBisCO catalyzes two reactions: the carboxylation of D-ribulose 1,5-bisphosphate, the primary event in carbon dioxide fixation, as well as the oxidative fragmentation of the pentose substrate in the photorespiration process. Both reactions occur simultaneously and in competition at the same active site. This is Ribulose bisphosphate carboxylase large chain from Nicotiana acuminata (Acuminate tobacco).